Reading from the N-terminus, the 337-residue chain is 2-oxoglutarate-dependent dioxygenase 19 (337 aa).

Residues 1 to 25 (MVAPSRLPSHEEQSAAAAADGSATP) are disordered. A Fe2OG dioxygenase domain is found at 179 to 283 (NLESCFQILV…RMSFVSLIGP (105 aa)). His-208, Asp-210, and His-264 together coordinate Fe cation. Arg-274 serves as a coordination point for 2-oxoglutarate.

It belongs to the iron/ascorbate-dependent oxidoreductase family. Fe(2+) is required as a cofactor. The cofactor is L-ascorbate. As to expression, expressed in shoots.

It localises to the cytoplasm. The enzyme catalyses melatonin + 2-oxoglutarate + O2 = 2-hydroxymelatonin + succinate + CO2. Functionally, involved in melatonin degradation. Catalyzes the hydroxylation of melatonin to produce 2-hydroxymelatonin. In Oryza sativa subsp. japonica (Rice), this protein is 2-oxoglutarate-dependent dioxygenase 19.